The following is an 830-amino-acid chain: MDSFRKRGRRDSESLPFESENSSLGATPLSLPPSSPPPEFSDEAAEALVEEDIEDLDGEALDVEDEEGEDLFGEGMERDYQQNLELDRYDIEELDDDNDLEELDIGARRAVDARLRRRDIELDAAAGRTKPAAFLQDEDDDLDSNLGTGFTRHRHRIYDEYSPNVGALDESGELPLESIADVKADSIAEWVTLDPVRRTIAREFKNFLLEYTDENGTSVYGNRIRTLGEVNAESLMVNYAHLGESKPILAYFLANAPAPIFRIFDRVALEATLLHYPDYERIHSDIHVRITNLPTCFTLRDLRQSHLNCLVRVSGVVTRRTGLFPQLKYIRFTCTKCGATLGPFFQDSSVEVKISFCHNCSSRGPFVINSERTVYNNYQRITLQESPGTVPSGRLPRHREVILLADLVDVAKPGEEIDVTGIYRNNFDASLNTKNGFPVFATIIEANHISQLDGSGNTDDDFSLSRLTDDEEREIRALAKSPDIHNRIIASMAPSIYGHRSIKTAIAAALFGGVPKNINGKHKIRGDINVLLLGDPGTAKSQFLKYVEKTAHRAVFATGQGASAVGLTASVRKDPITNEWTLEGGALVLADKGVCLIDEFDKMNDQDRTSIHEAMEQQSISISKAGIVTTLQARCTIIAAANPIGGRYNTTIPFNQNVELTEPILSRFDILQVVKDTVNPEIDEQLANFVVSSHIRSHPAFDPNMDVLKKVPTETGIDAKPIPQDLLRKYIHFAREKVFPRLQQMDEEKISRLYSDMRRESLATGSYPITVRHLESAIRLSEAFAKMQLSEFVRPSHIDKAIQVIIDSFVNAQKMSVKRSLSRTFAKYLI.

A disordered region spans residues 1 to 45 (MDSFRKRGRRDSESLPFESENSSLGATPLSLPPSSPPPEFSDEAA). The segment covering 30 to 39 (SLPPSSPPPE) has biased composition (pro residues). The segment at 334–360 (CTKCGATLGPFFQDSSVEVKISFCHNC) adopts a C4-type zinc-finger fold. Positions 484-691 (IHNRIIASMA…IDEQLANFVV (208 aa)) constitute an MCM domain. 534–541 (GDPGTAKS) contributes to the ATP binding site. Residues 666–669 (SRFD) carry the Arginine finger motif.

This sequence belongs to the MCM family. As to quaternary structure, component of the mcm2-7 complex. The complex forms a toroidal hexameric ring with the proposed subunit order mcm2-mcm6-mcm4-mcm7-mcm3-mcm5. The heterodimers of mcm4/mcm6 and mcm3/mcm5 interact with mcm2 and mcm7. Interacts with mcm10.

It is found in the nucleus. It carries out the reaction ATP + H2O = ADP + phosphate + H(+). Functionally, acts as a component of the mcm2-7 complex (mcm complex) which is the putative replicative helicase essential for 'once per cell cycle' DNA replication initiation and elongation in eukaryotic cells. The active ATPase sites in the mcm2-7 ring are formed through the interaction surfaces of two neighboring subunits such that a critical structure of a conserved arginine finger motif is provided in trans relative to the ATP-binding site of the Walker A box of the adjacent subunit. The six ATPase active sites, however, are likely to contribute differentially to the complex helicase activity. Plays an important role in DNA replication. This chain is DNA replication licensing factor mcm2 (mcm2), found in Schizosaccharomyces pombe (strain 972 / ATCC 24843) (Fission yeast).